The chain runs to 539 residues: Phosphoenolpyruvate carboxykinase (ATP) (539 aa).

Residues Arg-64, Tyr-206, and Lys-212 each contribute to the substrate site. ATP contacts are provided by residues Lys-212, His-231, and 247 to 255 (GLSGTGKTT). Mn(2+) is bound by residues Lys-212 and His-231. Mn(2+) is bound at residue Asp-268. ATP contacts are provided by residues Glu-296, Arg-332, 448–449 (RI), and Thr-454. A substrate-binding site is contributed by Arg-332.

It belongs to the phosphoenolpyruvate carboxykinase (ATP) family. As to quaternary structure, monomer. The cofactor is Mn(2+).

Its subcellular location is the cytoplasm. It carries out the reaction oxaloacetate + ATP = phosphoenolpyruvate + ADP + CO2. It participates in carbohydrate biosynthesis; gluconeogenesis. In terms of biological role, involved in the gluconeogenesis. Catalyzes the conversion of oxaloacetate (OAA) to phosphoenolpyruvate (PEP) through direct phosphoryl transfer between the nucleoside triphosphate and OAA. The sequence is that of Phosphoenolpyruvate carboxykinase (ATP) from Citrobacter koseri (strain ATCC BAA-895 / CDC 4225-83 / SGSC4696).